The chain runs to 276 residues: uncharacterized protein (276 aa).

The region spanning 20–137 (PVLIFIPGAN…PPINTFLPDS (118 aa)) is the AB hydrolase-1 domain. The segment at 57–76 (GESELTEPLPDSASNPDSDY) is disordered.

It belongs to the AB hydrolase superfamily.

This is an uncharacterized protein from Staphylococcus aureus (strain MW2).